A 283-amino-acid chain; its full sequence is Shikimate dehydrogenase (NADP(+)) (283 aa).

Residues 18 to 20 and T66 contribute to the shikimate site; that span reads SYS. Residue K70 is the Proton acceptor of the active site. Shikimate-binding residues include N91 and D106. Residues 130-134 and M225 contribute to the NADP(+) site; that span reads GAGGA. Y227 is a binding site for shikimate. G248 contributes to the NADP(+) binding site.

Belongs to the shikimate dehydrogenase family. As to quaternary structure, homodimer.

It carries out the reaction shikimate + NADP(+) = 3-dehydroshikimate + NADPH + H(+). It functions in the pathway metabolic intermediate biosynthesis; chorismate biosynthesis; chorismate from D-erythrose 4-phosphate and phosphoenolpyruvate: step 4/7. Functionally, involved in the biosynthesis of the chorismate, which leads to the biosynthesis of aromatic amino acids. Catalyzes the reversible NADPH linked reduction of 3-dehydroshikimate (DHSA) to yield shikimate (SA). This chain is Shikimate dehydrogenase (NADP(+)), found in Pelodictyon phaeoclathratiforme (strain DSM 5477 / BU-1).